Reading from the N-terminus, the 104-residue chain is MATELKEYLVIIPDLPDVLAKRQVLLKPHNQDAAPLVKAGRVPFFGSTLAHHSAEGQQVAENGTVMIIKAESEEEIKEIIRKDIFTIEGVWDFGKLSIWPFKSK.

It belongs to the YciI family.

It participates in mycotoxin biosynthesis. Its function is as follows. Part of the gene cluster that mediates the biosynthesis of fusaric acid, a mycotoxin with low to moderate toxicity to animals and humans, but with high phytotoxic properties. L-aspartate is suggested as fusaric acid amino acid precursor that is activated and further processed to O-acetyl-L-homoserine by cluster enzymes aspartate kinase FUB3 and homoserine O-acetyltransferase FUB5, as well as enzymes of the primary metabolism. The polyketide synthase (PKS) FUB1 generates the triketide trans-2-hexenal which is presumptively released by the hydrolase FUB4 and linked to the NRPS-bound amino acid precursor by NAD(P)-dependent dehydrogenase FUB6. FUB1, FUB4, and the non-canonical NRPS Fub8 may form an enzyme complex. Further processing of the NRPS-bound intermediate might be carried out by FUB6 and the sulfhydrylase FUB7, enabling a spontaneous electrocyclization to close the carbon backbone of fusaric acid. Dihydrofusaric acid is likely to be released via reduction by the thioester reductase (TR) domain of FUB8 whereupon the final oxidation to fusaric acid may (also) be performed by the FMN-dependent dehydrogenase FUB9. This chain is Fusaric acid biosynthesis protein 2, found in Gibberella fujikuroi (strain CBS 195.34 / IMI 58289 / NRRL A-6831) (Bakanae and foot rot disease fungus).